A 744-amino-acid polypeptide reads, in one-letter code: Glucosamine inositolphosphorylceramide transferase 1 (744 aa).

3 helical membrane passes run 31 to 51 (FLVA…WLVV), 378 to 398 (SLFG…VGFV), and 460 to 480 (LFFC…VHFL). Substrate contacts are provided by residues Asn-534, 558–563 (NSLNNR), 579–581 (DDD), Arg-609, and 665–669 (FNCED). Asp-581 provides a ligand contact to Mn(2+). A disulfide bridge links Cys-667 with Cys-718. The active site involves Asp-669.

The protein belongs to the glycosyltransferase 64 family. Requires Mn(2+) as cofactor. As to expression, highly expressed in almost all tissues.

It localises to the membrane. It functions in the pathway sphingolipid metabolism. In terms of biological role, essential protein. Glycosyltransferase that mediates the glycosylation of glycosylinositol phosphorylceramides (GIPCs), the major sphingolipids in the plasma membrane; acts as a HexN(Ac)-specific GIPC sugar transferase. Responsible for the glycosylation of a subgroup of GIPCs found in seeds and pollen that contain GlcNAc and GlcN (GlcN(Ac)). Maybe involved in the maintenance of cell-cell adhesion. The chain is Glucosamine inositolphosphorylceramide transferase 1 from Oryza sativa subsp. japonica (Rice).